The following is a 580-amino-acid chain: Protein O-linked-mannose beta-1,4-N-acetylglucosaminyltransferase 2 (580 aa).

Topologically, residues 1-4 (MHLS) are cytoplasmic. A helical; Signal-anchor for type II membrane protein membrane pass occupies residues 5-25 (AVFNALLVSVLAAVLWKHVRL). The Lumenal segment spans residues 26-580 (REHAATLEEE…PFADVLVCNT (555 aa)). 2 N-linked (GlcNAc...) asparagine glycosylation sites follow: asparagine 99 and asparagine 276. The Fibronectin type-III domain occupies 488-580 (ARCQASVHGA…PFADVLVCNT (93 aa)).

The protein belongs to the glycosyltransferase 61 family.

It is found in the endoplasmic reticulum membrane. The enzyme catalyses 3-O-(alpha-D-mannosyl)-L-threonyl-[protein] + UDP-N-acetyl-alpha-D-glucosamine = 3-O-(N-acetyl-beta-D-glucosaminyl-(1-&gt;4)-alpha-D-mannosyl)-L-threonyl-[protein] + UDP + H(+). It functions in the pathway protein modification; protein glycosylation. O-linked mannose beta-1,4-N-acetylglucosaminyltransferase that transfers UDP-N-acetyl-D-glucosamine to the 4-position of the mannose to generate N-acetyl-D-glucosamine-beta-1,4-O-D-mannosylprotein. Involved in the biosynthesis of the phosphorylated O-mannosyl trisaccharide (N-acetylgalactosamine-beta-3-N-acetylglucosamine-beta-4-(phosphate-6-)mannose), a carbohydrate structure present in alpha-dystroglycan (DAG1), which is required for binding laminin G-like domain-containing extracellular proteins with high affinity. This chain is Protein O-linked-mannose beta-1,4-N-acetylglucosaminyltransferase 2 (POMGNT2), found in Pan troglodytes (Chimpanzee).